We begin with the raw amino-acid sequence, 509 residues long: Transcription factor SOX-9 (509 aa).

Disordered stretches follow at residues 1–66 (MNLL…ESEE) and 160–271 (RLRV…IDFR). Over residues 27–41 (SEGSRGSPCPSGSGS) the composition is skewed to low complexity. Residues 42 to 52 (DTENTRPQENT) are compositionally biased toward polar residues. Basic and acidic residues-rich tracts occupy residues 56 to 66 (GEPDLKKESEE) and 160 to 174 (RLRV…DYKY). Positions 63–103 (ESEEDKFPVCIREAVSQVLKGYDWTLVPMPVRVNGSSKNKP) are dimerization (DIM). Positions 63–103 (ESEEDKFPVCIREAVSQVLKGYDWTLVPMPVRVNGSSKNKP) are PQA. S64 carries the phosphoserine modification. A DNA-binding region (HMG box) is located at residues 105-173 (VKRPMNAFMV…QHKKDHPDYK (69 aa)). S211 carries the phosphoserine modification. Residues 224–307 (PGEHSGQSQG…LPPNGHPGVP (84 aa)) form a transactivation domain (TAM) region. 2 consecutive short sequence motifs (9aaTAD) follow at residues 275–284 (IGELSSDVIS) and 290–298 (DVNEFDQYL). 2 disordered regions span residues 335-415 (WMSK…QHSP) and 420-439 (YSPF…TRSQ). Residues 341 to 359 (APPPPPHPPQQPPPVPQAP) show a composition bias toward pro residues. Positions 360-369 (AQPQAALPQQ) are enriched in low complexity. Residues 380–415 (HTLTTLSSEPGQSQRTHIKTEQLSPSHYSEQQQHSP) show a composition bias toward polar residues. A transactivation domain (TAC) region spans residues 394–509 (RTHIKTEQLS…QPVYTQLTRP (116 aa)). Residue K398 forms a Glycyl lysine isopeptide (Lys-Gly) (interchain with G-Cter in ubiquitin) linkage. Positions 460–468 (SVLYSTFTY) match the 9aaTAD 3 motif. The tract at residues 479–509 (PIADTSGVPSIPQTHSPQHWEQPVYTQLTRP) is disordered. Over residues 485-509 (GVPSIPQTHSPQHWEQPVYTQLTRP) the composition is skewed to polar residues.

Homodimer; homodimerization is required for activity. Interacts (via C-terminus) with ZNF219; forming a complex that binds to the COL2A1 promoter and activates COL2A1 expression. Interacts with DDRGK1. Interacts with EP300/p300. Interacts with beta-catenin (CTNNB1); inhibiting CTNNB1 activity by competing with the binding sites of TCF/LEF within CTNNB1. Post-translationally, acetylated; acetylation impairs nuclear localization and ability to transactivate expression of target genes. Deacetylated by SIRT1. Phosphorylation at Ser-64 and Ser-211 by PKA increases transcriptional activity and may help delay chondrocyte maturation downstream of PTHLH/PTHrP signaling. Phosphorylation at either Ser-64 or Ser-211 is required for sumoylation, but phosphorylation is not dependent on sumoylation. Phosphorylated on tyrosine residues; tyrosine dephosphorylation by PTPN11/SHP2 blocks SOX9 phosphorylation by PKA and subsequent SUMOylation. In terms of processing, sumoylated; phosphorylation at either Ser-64 or Ser-211 is required for sumoylation. Sumoylation is induced by BMP signaling pathway. Post-translationally, ubiquitinated; ubiquitination leads to proteasomal degradation and is negatively regulated by DDRGK1.

The protein resides in the nucleus. In terms of biological role, transcription factor that plays a key role in chondrocytes differentiation and skeletal development. Specifically binds the 5'-ACAAAG-3' DNA motif present in enhancers and super-enhancers and promotes expression of genes important for chondrogenesis, including cartilage matrix protein-coding genes COL2A1, COL4A2, COL9A1, COL11A2 and ACAN, SOX5 and SOX6. Also binds to some promoter regions. Plays a central role in successive steps of chondrocyte differentiation. Absolutely required for precartilaginous condensation, the first step in chondrogenesis during which skeletal progenitors differentiate into prechondrocytes. Together with SOX5 and SOX6, required for overt chondrogenesis when condensed prechondrocytes differentiate into early stage chondrocytes, the second step in chondrogenesis. Later, required to direct hypertrophic maturation and block osteoblast differentiation of growth plate chondrocytes: maintains chondrocyte columnar proliferation, delays prehypertrophy and then prevents osteoblastic differentiation of chondrocytes by lowering beta-catenin (CTNNB1) signaling and RUNX2 expression. Also required for chondrocyte hypertrophy, both indirectly, by keeping the lineage fate of chondrocytes, and directly, by remaining present in upper hypertrophic cells and transactivating COL10A1 along with MEF2C. Low lipid levels are the main nutritional determinant for chondrogenic commitment of skeletal progenitor cells: when lipids levels are low, FOXO (FOXO1 and FOXO3) transcription factors promote expression of SOX9, which induces chondrogenic commitment and suppresses fatty acid oxidation. Mechanistically, helps, but is not required, to remove epigenetic signatures of transcriptional repression and deposit active promoter and enhancer marks at chondrocyte-specific genes. Acts in cooperation with the Hedgehog pathway-dependent GLI (GLI1 and GLI3) transcription factors. In addition to cartilage development, also acts as a regulator of proliferation and differentiation in epithelial stem/progenitor cells: involved in the lung epithelium during branching morphogenesis, by balancing proliferation and differentiation and regulating the extracellular matrix. Controls epithelial branching during kidney development. The polypeptide is Transcription factor SOX-9 (SOX9) (Sus scrofa (Pig)).